The sequence spans 254 residues: Type III pantothenate kinase (254 aa).

6-13 provides a ligand contact to ATP; the sequence is DVGNSNIV. Residues Tyr100 and 107 to 110 contribute to the substrate site; that span reads GADR. Asp109 functions as the Proton acceptor in the catalytic mechanism. Asp129 is a binding site for K(+). Thr132 lines the ATP pocket. Thr184 is a binding site for substrate.

Belongs to the type III pantothenate kinase family. Homodimer. The cofactor is NH4(+). Requires K(+) as cofactor.

The protein resides in the cytoplasm. The catalysed reaction is (R)-pantothenate + ATP = (R)-4'-phosphopantothenate + ADP + H(+). Its pathway is cofactor biosynthesis; coenzyme A biosynthesis; CoA from (R)-pantothenate: step 1/5. Catalyzes the phosphorylation of pantothenate (Pan), the first step in CoA biosynthesis. In Geobacter sp. (strain M21), this protein is Type III pantothenate kinase.